The primary structure comprises 144 residues: Granulocyte-macrophage colony-stimulating factor (144 aa).

Residues 1-17 (MWLQNLLFLGIVVYSFS) form the signal peptide. Ser-22 carries an O-linked (GalNAc...) serine glycan. A glycan (O-linked (GalNAc...) threonine) is linked at Thr-27. 2 disulfide bridges follow: Cys-71–Cys-113 and Cys-105–Cys-138. Asn-86 carries an N-linked (GlcNAc...) asparagine glycan.

Belongs to the GM-CSF family. As to quaternary structure, monomer. The signaling GM-CSF receptor complex is a dodecamer of two head-to-head hexamers of two alpha, two beta, and two ligand subunits.

The protein localises to the secreted. Its function is as follows. Cytokine that stimulates the growth and differentiation of hematopoietic precursor cells from various lineages, including granulocytes, macrophages, eosinophils and erythrocytes. This chain is Granulocyte-macrophage colony-stimulating factor (Csf2), found in Rattus norvegicus (Rat).